The sequence spans 470 residues: 6-phospho-beta-glucosidase BglB (470 aa).

The active-site Proton donor is Glu-172. Glu-361 acts as the Nucleophile in catalysis.

Belongs to the glycosyl hydrolase 1 family.

It carries out the reaction 6-phospho-beta-D-glucosyl-(1-&gt;4)-D-glucose + H2O = D-glucose 6-phosphate + D-glucose. Its function is as follows. Catalyzes the hydrolysis of phosphorylated beta-glucosides into glucose-6-phosphate (G-6-P) and aglycone. It has a high affinity for phosphorylated aromatic beta-glucosides (p-nitrophenyl-beta-glucoside, phenyl beta-glucoside, arbutin and phosphorylated salicin), and a low affinity for phosphorylated beta-methyl-glucoside. In Escherichia coli (strain K12), this protein is 6-phospho-beta-glucosidase BglB (bglB).